The primary structure comprises 106 residues: Cell division protein FtsB (106 aa).

The Cytoplasmic portion of the chain corresponds to 1 to 3 (MGK). Residues 4 to 21 (LTLLLLALLGWLQYSLWL) form a helical membrane-spanning segment. The Periplasmic portion of the chain corresponds to 22–106 (GKNGVHDYVR…ASSSQNNLQK (85 aa)). The stretch at 40–62 (QGSNAKLKARNDQLFAEIDDLNG) forms a coiled coil.

It belongs to the FtsB family. As to quaternary structure, part of a complex composed of FtsB, FtsL and FtsQ.

It localises to the cell inner membrane. Essential cell division protein. May link together the upstream cell division proteins, which are predominantly cytoplasmic, with the downstream cell division proteins, which are predominantly periplasmic. The sequence is that of Cell division protein FtsB from Serratia proteamaculans (strain 568).